The following is a 203-amino-acid chain: Large ribosomal subunit protein uL13 (203 aa).

Residue Ala2 is modified to N-acetylalanine. A Citrulline modification is found at Arg59. The residue at position 77 (Ser77) is a Phosphoserine; by ZIPK/DAPK3. Arg140 is subject to Citrulline. N6-acetyllysine is present on Lys191.

The protein belongs to the universal ribosomal protein uL13 family. In terms of assembly, component of the 60S ribosome. Component of the GAIT complex. Interacts with EIF4G1. Post-translationally, phosphorylation at Ser-77 upon interferon-gamma treatment in macrophages involves a DAPK1-DAPK3 kinase cascade and is causing release from the ribosome, association with the GAIT complex and subsequent involvement in transcript-selective translation inhibition. Citrullinated by PADI4.

Its subcellular location is the cytoplasm. Associated with ribosomes but is not required for canonical ribosome function and has extra-ribosomal functions. Component of the GAIT (gamma interferon-activated inhibitor of translation) complex which mediates interferon-gamma-induced transcript-selective translation inhibition in inflammation processes. Upon interferon-gamma activation and subsequent phosphorylation dissociates from the ribosome and assembles into the GAIT complex which binds to stem loop-containing GAIT elements in the 3'-UTR of diverse inflammatory mRNAs (such as ceruplasmin) and suppresses their translation. In the GAIT complex interacts with m7G cap-bound eIF4G at or near the eIF3-binding site and blocks the recruitment of the 43S ribosomal complex. Involved in methylation of rRNA. This is Large ribosomal subunit protein uL13 (Rpl13a) from Mus musculus (Mouse).